Here is a 126-residue protein sequence, read N- to C-terminus: Large ribosomal subunit protein bL17 (126 aa).

This sequence belongs to the bacterial ribosomal protein bL17 family. In terms of assembly, part of the 50S ribosomal subunit. Contacts protein L32.

The protein is Large ribosomal subunit protein bL17 of Lawsonia intracellularis (strain PHE/MN1-00).